The following is a 132-amino-acid chain: Histone H2A.1 (132 aa).

It belongs to the histone H2A family. The nucleosome is a histone octamer containing two molecules each of H2A, H2B, H3 and H4 assembled in one H3-H4 heterotetramer and two H2A-H2B heterodimers. The octamer wraps approximately 147 bp of DNA.

The protein localises to the nucleus. The protein resides in the chromosome. Core component of nucleosome. Nucleosomes wrap and compact DNA into chromatin, limiting DNA accessibility to the cellular machineries which require DNA as a template. Histones thereby play a central role in transcription regulation, DNA repair, DNA replication and chromosomal stability. DNA accessibility is regulated via a complex set of post-translational modifications of histones, also called histone code, and nucleosome remodeling. In Leishmania infantum, this protein is Histone H2A.1.